The primary structure comprises 429 residues: Glutamate dehydrogenase B (429 aa).

Positions 1–20 (MAQTPPPESAPSTDSEPETA) are disordered. Residue Lys-119 is part of the active site.

Belongs to the Glu/Leu/Phe/Val dehydrogenases family. As to quaternary structure, homohexamer.

The protein is Glutamate dehydrogenase B (gdhB) of Halobacterium salinarum (strain ATCC 700922 / JCM 11081 / NRC-1) (Halobacterium halobium).